A 129-amino-acid chain; its full sequence is Small ribosomal subunit protein bS6 (129 aa).

Residues 103–129 (LKQKEERAERAPRREERAEAKPEAAAE) form a disordered region. Residues 104-129 (KQKEERAERAPRREERAEAKPEAAAE) are compositionally biased toward basic and acidic residues.

This sequence belongs to the bacterial ribosomal protein bS6 family.

Functionally, binds together with bS18 to 16S ribosomal RNA. The chain is Small ribosomal subunit protein bS6 from Vibrio campbellii (strain ATCC BAA-1116).